A 574-amino-acid chain; its full sequence is E3 ubiquitin-protein ligase TRIM23 (574 aa).

The RING-type; degenerate zinc-finger motif lies at 31–76 (CGVCEDVFSLQGDKVPRLLLCGHTVCHDCLTRLPLHGRAIRCPFDR). The segment at 122 to 168 (ESIIRCDEDEAHVASVYCTVCATHLCSDCSQVTHSTKTLAKHRRVPL) adopts a B box-type; degenerate zinc-finger fold. Residues 352 to 379 (RVVLAKQEITRLLETLQKQQQQFTEVAD) are a coiled coil. The tract at residues 390–574 (TFTKDNRVHI…LVAAGVLDVA (185 aa)) is ARF-like. Residues 411 to 418 (GLDGAGKT), 454 to 458 (DVGGK), and 513 to 516 (NKQD) contribute to the GTP site.

This sequence in the C-terminal section; belongs to the small GTPase superfamily. Arf family. In terms of assembly, homodimer. Interacts with PSCD1. Interacts with UBE2D2. Interacts with TBK1 (via N-terminal kinase domain) and p62/SQSTM1.

The protein localises to the cytoplasm. Its subcellular location is the endomembrane system. It localises to the golgi apparatus membrane. The protein resides in the lysosome membrane. It catalyses the reaction S-ubiquitinyl-[E2 ubiquitin-conjugating enzyme]-L-cysteine + [acceptor protein]-L-lysine = [E2 ubiquitin-conjugating enzyme]-L-cysteine + N(6)-ubiquitinyl-[acceptor protein]-L-lysine.. The protein operates within protein modification; protein ubiquitination. Its function is as follows. Acts as an E3 ubiquitin-protein ligase. Plays an essential role in autophagy activation during viral infection. Mechanistically, activates TANK-binding kinase 1/TBK1 by facilitating its dimerization and ability to phosphorylate the selective autophagy receptor SQSTM1. In order to achieve this function, TRIM23 mediates 'Lys-27'-linked auto-ubiquitination of its ADP-ribosylation factor (ARF) domain to induce its GTPase activity and its recruitment to autophagosomes. The protein is E3 ubiquitin-protein ligase TRIM23 (Trim23) of Mus musculus (Mouse).